The chain runs to 110 residues: Replication initiation control protein YabA (110 aa).

4 residues coordinate Zn(2+): His-84, Cys-86, Cys-100, and Cys-103.

It belongs to the YabA family. Homotetramer. Interacts with both DnaA and DnaN, acting as a bridge between these two proteins. Zn(2+) serves as cofactor.

Its subcellular location is the cytoplasm. It is found in the nucleoid. In terms of biological role, involved in control of chromosome replication initiation. Inhibits the cooperative binding of DnaA to the oriC region, thus negatively regulating initiation of chromosome replication. Inhibits the ability of DnaA-ATP to form a helix on DNA; does not disassemble preformed DnaA-DNA helices. Decreases the residence time of DnaA on the chromosome at its binding sites (oriC, replication forks and promoter-binding sites). Tethers DnaA to the replication machinery via the DNA polymerase beta sliding clamp subunit (dnaN). Associates with oriC and other DnaA targets on the chromosome in a DnaA-dependent manner. This is Replication initiation control protein YabA from Streptococcus mutans serotype c (strain ATCC 700610 / UA159).